The following is a 561-amino-acid chain: uncharacterized protein (561 aa).

2 disordered regions span residues 369–390 (SVPENGKPNMGRIPSAPSLSKG) and 429–515 (EGLG…GESE). Serine 383 carries the post-translational modification Phosphoserine. Residues 465–503 (NISPESSRFGTPSDPNSSSQSLGNEVLSRPNSNSNSAES) show a composition bias toward polar residues.

This is an uncharacterized protein from Schizosaccharomyces pombe (strain 972 / ATCC 24843) (Fission yeast).